An 814-amino-acid chain; its full sequence is Putative E3 ubiquitin-protein ligase RF298 (814 aa).

Disordered regions lie at residues 1–51 (MVEK…ASLT), 221–301 (SVSN…TKSA), and 411–441 (ALPA…STKP). The span at 221–231 (SVSNASKSSES) shows a compositional bias: low complexity. Over residues 289–301 (SVSTASGEGTKSA) the composition is skewed to polar residues. Basic and acidic residues predominate over residues 423 to 435 (SEKKSGSEPEEKP). Residues 506–710 (ELKALRKEKE…KLKSDSLKIA (205 aa)) adopt a coiled-coil conformation. The segment at 760-800 (CVMCLSEEMSVIFLPCAHQVLCSKCNQLHEKEAMEDCPSCR) adopts an RING-type zinc-finger fold.

It belongs to the RING-type zinc finger family.

It carries out the reaction S-ubiquitinyl-[E2 ubiquitin-conjugating enzyme]-L-cysteine + [acceptor protein]-L-lysine = [E2 ubiquitin-conjugating enzyme]-L-cysteine + N(6)-ubiquitinyl-[acceptor protein]-L-lysine.. Its pathway is protein modification; protein ubiquitination. The sequence is that of Putative E3 ubiquitin-protein ligase RF298 (RF298) from Arabidopsis thaliana (Mouse-ear cress).